The primary structure comprises 271 residues: ELH (271 aa).

A signal peptide spans 1–28 (MKRPNNRPTNTMSLILCLTLSSLCVSSQ). 2 consecutive propeptides follow at residues 29-95 (SASV…NEKR) and 162-184 (AAGG…RRKR). The interval 162-190 (AAGGMEQSEGQNPETESHSRRKRSVLTPS) is disordered. Lys241 carries the lysine amide modification.

It belongs to the molluscan ELH family. In terms of tissue distribution, bag cell neurons.

The protein resides in the secreted. Its function is as follows. ELH acts as a neurotransmitter locally, upon neurons of the abdominal ganglion and as a hormone by diffusing into the circulating hemolymph and modulating the activity of other organs. It specifically causes contraction of smooth muscle in the ovotestis and expulsion of the egg string. Functionally, alpha-BCP decreases the activity of a cluster of neurons in the left upper quadrant of the abdominal ganglion. In terms of biological role, beta-BCP specifically excites 2 neurons, L1 and R1, in the abdominal ganglion. The polypeptide is ELH (Aplysia californica (California sea hare)).